We begin with the raw amino-acid sequence, 100 residues long: Aspartyl/glutamyl-tRNA(Asn/Gln) amidotransferase subunit C (100 aa).

Belongs to the GatC family. Heterotrimer of A, B and C subunits.

It catalyses the reaction L-glutamyl-tRNA(Gln) + L-glutamine + ATP + H2O = L-glutaminyl-tRNA(Gln) + L-glutamate + ADP + phosphate + H(+). The enzyme catalyses L-aspartyl-tRNA(Asn) + L-glutamine + ATP + H2O = L-asparaginyl-tRNA(Asn) + L-glutamate + ADP + phosphate + 2 H(+). In terms of biological role, allows the formation of correctly charged Asn-tRNA(Asn) or Gln-tRNA(Gln) through the transamidation of misacylated Asp-tRNA(Asn) or Glu-tRNA(Gln) in organisms which lack either or both of asparaginyl-tRNA or glutaminyl-tRNA synthetases. The reaction takes place in the presence of glutamine and ATP through an activated phospho-Asp-tRNA(Asn) or phospho-Glu-tRNA(Gln). This is Aspartyl/glutamyl-tRNA(Asn/Gln) amidotransferase subunit C from Rickettsia africae (strain ESF-5).